The chain runs to 289 residues: Alpha-soluble NSF attachment protein (289 aa).

A TPR repeat occupies 112-145; that stretch reads GKYYKEIAELYELEQNFEQAIIYFEKAADIYQSE.

The protein belongs to the SNAP family.

The protein resides in the membrane. In terms of biological role, required for vesicular transport between the endoplasmic reticulum and the Golgi apparatus. The chain is Alpha-soluble NSF attachment protein from Vitis vinifera (Grape).